The following is a 247-amino-acid chain: tRNA uridine(34) hydroxylase (247 aa).

The Rhodanese domain occupies 124–218; sequence TKQDVIVIDT…YLEDTQNKNN (95 aa). The active-site Cysteine persulfide intermediate is the Cys178.

The protein belongs to the TrhO family.

It catalyses the reaction uridine(34) in tRNA + AH2 + O2 = 5-hydroxyuridine(34) in tRNA + A + H2O. Functionally, catalyzes oxygen-dependent 5-hydroxyuridine (ho5U) modification at position 34 in tRNAs. This chain is tRNA uridine(34) hydroxylase, found in Rickettsia rickettsii (strain Iowa).